A 221-amino-acid chain; its full sequence is Lipoprotein-releasing system ATP-binding protein LolD (221 aa).

Residues 8 to 220 (LKMISKHYKQ…YNLKHGLLNI (213 aa)) form the ABC transporter domain. 42-49 (GSSGSGKS) provides a ligand contact to ATP.

It belongs to the ABC transporter superfamily. Lipoprotein translocase (TC 3.A.1.125) family. In terms of assembly, the complex is composed of two ATP-binding proteins (LolD) and two transmembrane proteins (LolC and LolE).

The protein resides in the cell inner membrane. In terms of biological role, part of the ABC transporter complex LolCDE involved in the translocation of mature outer membrane-directed lipoproteins, from the inner membrane to the periplasmic chaperone, LolA. Responsible for the formation of the LolA-lipoprotein complex in an ATP-dependent manner. The polypeptide is Lipoprotein-releasing system ATP-binding protein LolD (Rickettsia prowazekii (strain Madrid E)).